Reading from the N-terminus, the 118-residue chain is uncharacterized protein (118 aa).

A disordered region spans residues 25–85; sequence AEQPGSGGIA…SSSSTPSRAR (61 aa). Over residues 71 to 83 the composition is skewed to low complexity; that stretch reads RPSASSSSSTPSR.

This is an uncharacterized protein from Azospirillum brasilense.